The sequence spans 289 residues: Protease HtpX (289 aa).

2 helical membrane-spanning segments follow: residues 7 to 27 (LFLL…NIIF) and 38 to 58 (GGIL…SLFM). H144 contacts Zn(2+). E145 is an active-site residue. A Zn(2+)-binding site is contributed by H148. A run of 2 helical transmembrane segments spans residues 155–175 (VTMT…SRII) and 194–214 (LVFW…ATMI). Position 223 (E223) interacts with Zn(2+).

The protein belongs to the peptidase M48B family. It depends on Zn(2+) as a cofactor.

The protein localises to the cell inner membrane. The sequence is that of Protease HtpX from Actinobacillus pleuropneumoniae serotype 5b (strain L20).